The primary structure comprises 1142 residues: Protein lin-25 (1142 aa).

Residues 600-613 (IEEEIEEEEEDIEP) are compositionally biased toward acidic residues. The disordered stretch occupies residues 600–706 (IEEEIEEEEE…EKPKEPLEPT (107 aa)). Composition is skewed to basic and acidic residues over residues 614 to 627 (EVVK…TEKE), 652 to 662 (DEQKTEEKMDT), and 679 to 703 (DPPK…KEPL).

The protein localises to the nucleus. Its subcellular location is the cytoplasm. Functionally, participates in the inductive signaling pathway downstream of let-60 Ras and the RAF/MAP kinase cascade to regulate specification and differentiation of many cell types. Positively regulates the fate of vulval precursor cells. Required for induction of the P12 and excretory duct cell fates. In males, it is also required for proper formation of spicules. Does not function in the signaling pathway that promotes exit from pachytene. The polypeptide is Protein lin-25 (Caenorhabditis briggsae).